A 465-amino-acid polypeptide reads, in one-letter code: Putative multidrug resistance protein MdtD (465 aa).

The next 12 helical transmembrane spans lie at 12–32 (LWIV…VNTA), 49–69 (SVIV…GWLA), 72–92 (IGVK…SLMC), 138–158 (FVTL…GFLV), 165–185 (WIFL…LLLM), 195–215 (FDIS…LALD), 219–239 (GLGL…IALG), 267–287 (LVGS…TPIF), 290–310 (IGLG…IIGS), 329–351 (VLVN…AIMG), 393–413 (LLSM…GILL), and 430–450 (SAFL…ALIF).

It belongs to the major facilitator superfamily. TCR/Tet family.

It localises to the cell inner membrane. This Yersinia pseudotuberculosis serotype I (strain IP32953) protein is Putative multidrug resistance protein MdtD.